We begin with the raw amino-acid sequence, 164 residues long: MSKTPPKEDSRNRIVAVMLDEDSIGRSGPDIEHERAIAIYDLVEKNLFAPEGAGGGPFTLRIAITGNRLMFDIRREDDAPVVTHLLSLTPFRRIVKDYFMICDSYYQAIRTATPDKIEAIDMGRRGIHDEGSRTLQERLNGKVRVDFETARRLFTLISVLHWKG.

The protein belongs to the UPF0262 family.

The protein is UPF0262 protein Nham_0287 of Nitrobacter hamburgensis (strain DSM 10229 / NCIMB 13809 / X14).